The primary structure comprises 1958 residues: Probable Rho GTPase-activating protein CG5521 (1958 aa).

Disordered stretches follow at residues 1–21, 400–424, and 635–804; these read MFTKKSHADVKKSTAKLQDSK, PPFLLEPNDDPPPPSNAGGTPRSQR, and GSVW…GIEG. The span at 400–414 shows a compositional bias: pro residues; it reads PPFLLEPNDDPPPPS. The segment covering 640–656 has biased composition (low complexity); it reads GSGSNSAANGGSAASAA. Phosphoserine is present on residues serine 718, serine 764, and serine 767. Basic and acidic residues predominate over residues 758 to 774; that stretch reads DLRRAMSLDSLARKGDA. Positions 775–785 are enriched in acidic residues; it reads EETDSYQEGDN. Phosphoserine is present on residues serine 787, serine 791, serine 793, and serine 795. The segment covering 788–800 has biased composition (polar residues); that stretch reads GAGSRSPSPTASS. Tyrosine 980 bears the Phosphotyrosine mark. The interval 1534–1568 is disordered; sequence HSTQAPSPALRHASSNSSLQQPDQRSLHSTTASFD. Residues 1546–1568 show a composition bias toward polar residues; that stretch reads ASSNSSLQQPDQRSLHSTTASFD. Residue serine 1551 is modified to Phosphoserine. One can recognise a Rap-GAP domain in the interval 1612–1819; sequence LRNVDLQKCR…EERNRSLDSV (208 aa). A disordered region spans residues 1903–1958; the sequence is ATGMSSASPRGPRKLGAPFKSVTKKHSLQHIAVGGGAGAGGDTPPESPTLPQRRFK. A Phosphothreonine modification is found at threonine 1945. At serine 1949 the chain carries Phosphoserine.

This is Probable Rho GTPase-activating protein CG5521 from Drosophila melanogaster (Fruit fly).